A 24-amino-acid polypeptide reads, in one-letter code: 33.0 kDa cold shock protein (24 aa).

This sequence belongs to the thaumatin family. In terms of assembly, homooligomer; disulfide-linked. Glycosylated.

It localises to the secreted. Its subcellular location is the extracellular space. The protein localises to the apoplast. The protein is 33.0 kDa cold shock protein of Arachis hypogaea (Peanut).